Here is a 472-residue protein sequence, read N- to C-terminus: MIYIIGSGIAGLSAGVALRRAGKKVTLISKRIDGGSTPIAKGGVAASVGSDDSPELHAQDTIRVGDGLCDVKTVNYVTSEAKNVIETFESWGFEFEEDLRLEGGHTKRRVLHRTDETGREIFNFLLKLAREEGIPIIEDRLVEIRVKDGKVTGFVTEKRGLVEDVDKLVLATGGYSYLYEYSSTQSTNIGDGMAIAFKAGTILADMEFVQFHPTVTSLDGEVFLLTETLRGEGAQIINENGERFLFNYDKRGELAPRDILSRAIYIEMLKGHKVFIDLSKIEDFERKFPVVAKYLARHGHNYKVKIPIFPAAHFVDGGIRVNIRGESNIVNLYAIGEVSDSGLHGANRLASNSLLEGLVFGINLPRYVDSSWEGISTDDGIVHSVRISGNKTLSLKEIRRINWENVGIIRNEEKLVKAINTYSSSTQNEAIISYLTALAAEIRKESRGNHFREDYPYKDPNWEKRIYFKLVV.

FAD contacts are provided by residues 7-10 (SGIA), S29, 36-37 (ST), 42-43 (GG), and D191. The Proton donor/acceptor role is filled by R257. FAD is bound by residues E337 and 353–354 (SL).

It belongs to the FAD-dependent oxidoreductase 2 family. NadB subfamily. Monomer. The cofactor is FAD.

It is found in the cytoplasm. It catalyses the reaction L-aspartate + O2 = iminosuccinate + H2O2. It participates in cofactor biosynthesis; NAD(+) biosynthesis; iminoaspartate from L-aspartate (oxidase route): step 1/1. In terms of biological role, catalyzes the oxidation of L-aspartate to iminoaspartate, the first step in the de novo biosynthesis of NAD(+). Can also use L-asparagine, but not L-phenylalanine, L-glutamate, glycine, L-proline, L-alanine and D-aspartate. The protein is L-aspartate oxidase of Sulfurisphaera tokodaii (strain DSM 16993 / JCM 10545 / NBRC 100140 / 7) (Sulfolobus tokodaii).